The following is a 317-amino-acid chain: ADP-L-glycero-D-manno-heptose-6-epimerase (317 aa).

NADP(+) is bound by residues 10–11 (FI), 31–32 (DD), glutamine 38, lysine 53, 75–79 (QGACS), and asparagine 92. The active-site Proton acceptor is the tyrosine 139. Position 143 (lysine 143) interacts with NADP(+). Asparagine 166 provides a ligand contact to substrate. Valine 167 and lysine 175 together coordinate NADP(+). Lysine 175 acts as the Proton acceptor in catalysis. Substrate-binding positions include glycine 177, histidine 184, 198 to 201 (FEGV), arginine 211, and tyrosine 275.

Belongs to the NAD(P)-dependent epimerase/dehydratase family. HldD subfamily. In terms of assembly, homopentamer. NADP(+) serves as cofactor.

It catalyses the reaction ADP-D-glycero-beta-D-manno-heptose = ADP-L-glycero-beta-D-manno-heptose. The protein operates within nucleotide-sugar biosynthesis; ADP-L-glycero-beta-D-manno-heptose biosynthesis; ADP-L-glycero-beta-D-manno-heptose from D-glycero-beta-D-manno-heptose 7-phosphate: step 4/4. In terms of biological role, catalyzes the interconversion between ADP-D-glycero-beta-D-manno-heptose and ADP-L-glycero-beta-D-manno-heptose via an epimerization at carbon 6 of the heptose. This chain is ADP-L-glycero-D-manno-heptose-6-epimerase, found in Shewanella frigidimarina (strain NCIMB 400).